Consider the following 213-residue polypeptide: Ras-related protein Rab-4A (213 aa).

GTP-binding residues include Gly-18, Thr-19, Gly-20, Lys-21, Ser-22, Cys-23, Ser-37, His-39, and Thr-40. Ser-22 serves as a coordination point for Mg(2+). The short motif at 39–44 (HTIGVE) is the Switch 1 element. Positions 40 and 63 each coordinate Mg(2+). Residues 65–74 (AGQERFRSVT) carry the Switch 2 motif. Gly-66, Asn-121, Lys-122, Asp-124, Ala-152, and Leu-153 together coordinate GTP. 2 S-geranylgeranyl cysteine lipidation sites follow: Cys-211 and Cys-213. Position 213 is a cysteine methyl ester (Cys-213).

Belongs to the small GTPase superfamily. Rab family. The cofactor is Mg(2+).

The protein resides in the membrane. The protein localises to the cytoplasm. It is found in the early endosome membrane. Its subcellular location is the recycling endosome membrane. The catalysed reaction is GTP + H2O = GDP + phosphate + H(+). Its activity is regulated as follows. Regulated by guanine nucleotide exchange factors (GEFs) which promote the exchange of bound GDP for free GTP. Regulated by GTPase activating proteins (GAPs) which increase the GTP hydrolysis activity. Inhibited by GDP dissociation inhibitors (GDIs). Its function is as follows. The small GTPases Rab are key regulators of intracellular membrane trafficking, from the formation of transport vesicles to their fusion with membranes. Rabs cycle between an inactive GDP-bound form and an active GTP-bound form that is able to recruit to membranes different sets of downstream effectors directly responsible for vesicle formation, movement, tethering and fusion. RAB4A is involved in protein transport. Also plays a role in vesicular traffic. Mediates VEGFR2 endosomal trafficking to enhance VEGFR2 signaling. Acts as a regulator of platelet alpha-granule release during activation and aggregation of platelets. The polypeptide is Ras-related protein Rab-4A (rab4a) (Danio rerio (Zebrafish)).